Here is a 244-residue protein sequence, read N- to C-terminus: 7-cyano-7-deazaguanine synthase (244 aa).

Residue 14 to 24 participates in ATP binding; it reads FSGGQDSATCV. Cys202, Cys217, Cys220, and Cys223 together coordinate Zn(2+).

The protein belongs to the QueC family. Zn(2+) is required as a cofactor.

The catalysed reaction is 7-carboxy-7-deazaguanine + NH4(+) + ATP = 7-cyano-7-deazaguanine + ADP + phosphate + H2O + H(+). It functions in the pathway purine metabolism; 7-cyano-7-deazaguanine biosynthesis. In terms of biological role, catalyzes the ATP-dependent conversion of 7-carboxy-7-deazaguanine (CDG) to 7-cyano-7-deazaguanine (preQ(0)). This is 7-cyano-7-deazaguanine synthase from Burkholderia cenocepacia (strain ATCC BAA-245 / DSM 16553 / LMG 16656 / NCTC 13227 / J2315 / CF5610) (Burkholderia cepacia (strain J2315)).